A 532-amino-acid polypeptide reads, in one-letter code: 3-hydroxy-3-methylglutaryl-coenzyme A reductase 1 (532 aa).

Residues 63-83 form a helical membrane-spanning segment; it reads FATVVYLVSLFAHPDAPATTT. A linker region spans residues 77–117; the sequence is DAPATTTGDDDDGQGGSRRARPAAAEPAPMHGHGGGMMEAD. The tract at residues 78-111 is disordered; that stretch reads APATTTGDDDDGQGGSRRARPAAAEPAPMHGHGG. Residues 98 to 107 are compositionally biased toward low complexity; it reads PAAAEPAPMH. Residues 118 to 532 are catalytic; it reads DEEIVAAVAS…SSKDVAKAAS (415 aa). Glu211 acts as the Charge relay system in catalysis. Asn275 is a glycosylation site (N-linked (GlcNAc...) asparagine). Catalysis depends on charge relay system residues Lys343 and Asp419. The active-site Proton donor is His517. Asn521 carries an N-linked (GlcNAc...) asparagine glycan.

The protein belongs to the HMG-CoA reductase family.

The protein resides in the endoplasmic reticulum membrane. The enzyme catalyses (R)-mevalonate + 2 NADP(+) + CoA = (3S)-3-hydroxy-3-methylglutaryl-CoA + 2 NADPH + 2 H(+). It participates in metabolic intermediate biosynthesis; (R)-mevalonate biosynthesis; (R)-mevalonate from acetyl-CoA: step 3/3. Functionally, catalyzes the synthesis of mevalonate. The specific precursor of all isoprenoid compounds present in plants. The sequence is that of 3-hydroxy-3-methylglutaryl-coenzyme A reductase 1 (HMG1) from Oryza sativa subsp. japonica (Rice).